The chain runs to 380 residues: Bifunctional dihydropteroate synthase/dihydropteroate reductase (380 aa).

The interval 1–104 (MIVKRLNPDA…SQPFGLKHLA (104 aa)) is dihydropteroate reductase. The interval 105–380 (QELKSHLKAP…KVFKSLEETD (276 aa)) is dihydropteroate synthase. The Pterin-binding domain occupies 119 to 371 (PQIMAVLNLT…DIDEHIDLIK (253 aa)). Asn126 is a Mg(2+) binding site. Residues Asp202, Asn221, Asp289, Lys325, and 359–361 (RVH) contribute to the (7,8-dihydropterin-6-yl)methyl diphosphate site.

It in the C-terminal section; belongs to the DHPS family. The cofactor is FAD. FMN is required as a cofactor. Mg(2+) serves as cofactor.

The enzyme catalyses (7,8-dihydropterin-6-yl)methyl diphosphate + 4-aminobenzoate = 7,8-dihydropteroate + diphosphate. The catalysed reaction is (6S)-5,6,7,8-tetrahydropteroate + NAD(+) = 7,8-dihydropteroate + NADH + H(+). It participates in cofactor biosynthesis; tetrahydrofolate biosynthesis; 7,8-dihydrofolate from 2-amino-4-hydroxy-6-hydroxymethyl-7,8-dihydropteridine diphosphate and 4-aminobenzoate: step 1/2. Bifunctional enzyme that catalyzes the formation of dihydropteroate, the immediate precursor of folic acid and the reduction of dihydropteroate to tetrahydropteroate. This is Bifunctional dihydropteroate synthase/dihydropteroate reductase from Helicobacter pylori (strain ATCC 700392 / 26695) (Campylobacter pylori).